The sequence spans 215 residues: Riboflavin synthase (215 aa).

Lumazine-binding repeat units follow at residues 1-96 and 97-193; these read MFTG…FGGH and IVSG…EQFL. 2,4-dihydroxypteridine is bound by residues 4 to 6, 47 to 49, 61 to 66, 100 to 102, Lys-135, 144 to 146, and 158 to 163; these read GII, CLT, DVMSET, GHI, SLT, and SIIPHT.

In terms of assembly, homotrimer.

The enzyme catalyses 2 6,7-dimethyl-8-(1-D-ribityl)lumazine + H(+) = 5-amino-6-(D-ribitylamino)uracil + riboflavin. The protein operates within cofactor biosynthesis; riboflavin biosynthesis; riboflavin from 2-hydroxy-3-oxobutyl phosphate and 5-amino-6-(D-ribitylamino)uracil: step 2/2. Catalyzes the dismutation of two molecules of 6,7-dimethyl-8-ribityllumazine, resulting in the formation of riboflavin and 5-amino-6-(D-ribitylamino)uracil. The protein is Riboflavin synthase (ribE) of Actinobacillus pleuropneumoniae (Haemophilus pleuropneumoniae).